Reading from the N-terminus, the 515-residue chain is uncharacterized protein (515 aa).

Transmembrane regions (helical) follow at residues 1-21 (MSFV…LAGI), 165-185 (IGGP…GLLF), and 199-219 (GPVG…GLFG). The 93-residue stretch at 1–93 (MSFVVAAPEV…AGAYAGAEAA (93 aa)) folds into the PE domain. A compositionally biased stretch (gly residues) spans 349 to 360 (GGTLIGNGGDGG). Disordered stretches follow at residues 349-368 (GGTL…TDGF) and 463-515 (GVSG…SPGG).

This sequence belongs to the mycobacterial PE family. PGRS subfamily.

The protein resides in the cell membrane. This is an uncharacterized protein from Mycobacterium tuberculosis (strain CDC 1551 / Oshkosh).